The primary structure comprises 157 residues: Histone H2B.3 (157 aa).

The interval methionine 1 to valine 64 is disordered. Basic residues predominate over residues lysine 26–lysine 42. Residue lysine 153 forms a Glycyl lysine isopeptide (Lys-Gly) (interchain with G-Cter in ubiquitin) linkage.

The protein belongs to the histone H2B family. The nucleosome is a histone octamer containing two molecules each of H2A, H2B, H3 and H4 assembled in one H3-H4 heterotetramer and two H2A-H2B heterodimers. The octamer wraps approximately 147 bp of DNA. Monoubiquitinated to form H2BK143ub1; may give a specific tag for epigenetic transcriptional activation.

It localises to the nucleus. The protein resides in the chromosome. Functionally, core component of nucleosome. Nucleosomes wrap and compact DNA into chromatin, limiting DNA accessibility to the cellular machineries which require DNA as a template. Histones thereby play a central role in transcription regulation, DNA repair, DNA replication and chromosomal stability. DNA accessibility is regulated via a complex set of post-translational modifications of histones, also called histone code, and nucleosome remodeling. This is Histone H2B.3 from Volvox carteri (Green alga).